The primary structure comprises 564 residues: Acetylcholine receptor subunit alpha-type deg-3 (564 aa).

A signal peptide spans 1–20 (MTLKIRTIIILFCVISVTTT). The Extracellular segment spans residues 21–268 (SQSLNATLKT…SLVIQRKPLY (248 aa)). N-linked (GlcNAc...) asparagine glycosylation is found at Asn-25, Asn-37, Asn-125, and Asn-198. Intrachain disulfides connect Cys-185/Cys-199 and Cys-248/Cys-249. Transmembrane regions (helical) follow at residues 269–289 (YLVN…TGFF), 302–319 (INLG…MLMV), and 329–353 (FVPL…LTSV). Topologically, residues 354 to 526 (VLSVQGRRQY…WEFLATVLDR (173 aa)) are cytoplasmic. The helical transmembrane segment at 527 to 547 (FLLIVFVGAVVIVTAGLILVG) threads the bilayer.

This sequence belongs to the ligand-gated ion channel (TC 1.A.9) family. Acetylcholine receptor (TC 1.A.9.1) subfamily. The functional receptor is a heteromer of deg-3 and des-2. Interacts with ric-3; which is required for proper receptor folding.

The protein localises to the postsynaptic cell membrane. It is found in the cell membrane. Subunit of the non-synaptic neuronal acetylcholine receptor, which may play a role in chemotaxis towards choline. After binding choline or acetylcholine, the AChR responds by an extensive change in conformation that affects all subunits and leads to opening of an ion-conducting channel across the plasma membrane. The sequence is that of Acetylcholine receptor subunit alpha-type deg-3 (deg-3) from Caenorhabditis elegans.